A 216-amino-acid chain; its full sequence is Trimethylamine corrinoid protein 1 (216 aa).

In terms of domain architecture, B12-binding N-terminal spans 1–92 (MASKEEIIAK…EMEKRKSETK (92 aa)). The B12-binding domain occupies 94–216 (LGTVVIGTIE…VVSKVRAVLL (123 aa)). Histidine 107 serves as a coordination point for methylcob(III)alamin.

The protein belongs to the methylamine corrinoid protein family. As to quaternary structure, can form a complex with MttB.

Its pathway is one-carbon metabolism; methanogenesis from trimethylamine. Functionally, acts probably as a methyl group carrier between MttB and either MtbA or MtaA. This chain is Trimethylamine corrinoid protein 1 (mttC1), found in Methanosarcina acetivorans (strain ATCC 35395 / DSM 2834 / JCM 12185 / C2A).